We begin with the raw amino-acid sequence, 29 residues long: Galanin (29 aa).

The residue at position 29 (alanine 29) is an Alanine amide.

It belongs to the galanin family.

The protein resides in the secreted. Functionally, contracts smooth muscle of the gastrointestinal and genitourinary tract, regulates growth hormone release, modulates insulin release, and may be involved in the control of adrenal secretion. This Oncorhynchus mykiss (Rainbow trout) protein is Galanin (gal).